The chain runs to 517 residues: Ribose import ATP-binding protein RbsA 2 (517 aa).

ABC transporter domains follow at residues 10 to 245 (LRIE…GRSI) and 255 to 498 (DAGE…VSTH). Position 42 to 49 (42 to 49 (GENGAGKS)) interacts with ATP. The disordered stretch occupies residues 497–517 (THTGNSPHSGGTDGTEASRGH).

It belongs to the ABC transporter superfamily. Ribose importer (TC 3.A.1.2.1) family. As to quaternary structure, the complex is composed of an ATP-binding protein (RbsA), two transmembrane proteins (RbsC) and a solute-binding protein (RbsB).

Its subcellular location is the cell membrane. The enzyme catalyses D-ribose(out) + ATP + H2O = D-ribose(in) + ADP + phosphate + H(+). Part of the ABC transporter complex RbsABC involved in ribose import. Responsible for energy coupling to the transport system. The polypeptide is Ribose import ATP-binding protein RbsA 2 (Streptomyces coelicolor (strain ATCC BAA-471 / A3(2) / M145)).